A 192-amino-acid polypeptide reads, in one-letter code: Putative manganese efflux pump MntP (192 aa).

6 consecutive transmembrane segments (helical) span residues 3 to 23, 36 to 56, 65 to 85, 112 to 132, 136 to 156, and 171 to 191; these read FSAI…VAAA, VLLV…IGWL, VQAW…GKML, FVLA…LPML, FAIS…AGLF, and LAGG…HLVL.

It belongs to the MntP (TC 9.B.29) family.

It localises to the cell inner membrane. Its function is as follows. Probably functions as a manganese efflux pump. In Sorangium cellulosum (strain So ce56) (Polyangium cellulosum (strain So ce56)), this protein is Putative manganese efflux pump MntP.